A 404-amino-acid polypeptide reads, in one-letter code: MSQSRYFFTSESVSEGHPDKVADQISDAVLDDFIRQDPNSRVACETFVTTGQVIVGGEVTTTGIVDVQKIARKVITEIGYTKGEYMFEANSCGVLSALHSQSADINRGVDRKEAIADEFDRVGAGDQGMMFGYACTETPELMPAAIQFAQQLVKVLADIRKAGKIMTYLRPDAKSQVTLEYVDEKVARVDAVVVSTQHDPEPAGMSEAEFQEVIKKDIIENVIKKVIPANLLDLNTKFHINPTGRFEIGGPHGDTGLTGRKIIVDTYGGAAPHGGGAFSGKDPSKVDRSAAYASRHVAKNIVAAGLAEKCTVQVSYAIGVARPVSIYINTHGTAMHGLSDEQIQEKAEKIFDLRPLAIIRRFSLDNPQGWCYQETAAYGHFGRDIFPWEKTEKVAELKTAFSLA.

His-17 serves as a coordination point for ATP. Asp-19 provides a ligand contact to Mg(2+). Position 45 (Glu-45) interacts with K(+). 2 residues coordinate L-methionine: Glu-58 and Gln-101. Residues Gln-101–Arg-111 are flexible loop. Residues Asp-172–Lys-174, Arg-245–Phe-246, Asp-254, Arg-260–Lys-261, Ala-277, and Lys-281 each bind ATP. Asp-254 provides a ligand contact to L-methionine. Lys-285 contributes to the L-methionine binding site.

This sequence belongs to the AdoMet synthase family. Homotetramer; dimer of dimers. It depends on Mg(2+) as a cofactor. The cofactor is K(+).

It localises to the cytoplasm. The enzyme catalyses L-methionine + ATP + H2O = S-adenosyl-L-methionine + phosphate + diphosphate. It functions in the pathway amino-acid biosynthesis; S-adenosyl-L-methionine biosynthesis; S-adenosyl-L-methionine from L-methionine: step 1/1. In terms of biological role, catalyzes the formation of S-adenosylmethionine (AdoMet) from methionine and ATP. The overall synthetic reaction is composed of two sequential steps, AdoMet formation and the subsequent tripolyphosphate hydrolysis which occurs prior to release of AdoMet from the enzyme. This is S-adenosylmethionine synthase from Chlorobium luteolum (strain DSM 273 / BCRC 81028 / 2530) (Pelodictyon luteolum).